Here is an 879-residue protein sequence, read N- to C-terminus: Alanine--tRNA ligase (879 aa).

Residues His566, His570, Cys668, and His672 each contribute to the Zn(2+) site.

The protein belongs to the class-II aminoacyl-tRNA synthetase family. It depends on Zn(2+) as a cofactor.

The protein resides in the cytoplasm. The catalysed reaction is tRNA(Ala) + L-alanine + ATP = L-alanyl-tRNA(Ala) + AMP + diphosphate. Catalyzes the attachment of alanine to tRNA(Ala) in a two-step reaction: alanine is first activated by ATP to form Ala-AMP and then transferred to the acceptor end of tRNA(Ala). Also edits incorrectly charged Ser-tRNA(Ala) and Gly-tRNA(Ala) via its editing domain. The polypeptide is Alanine--tRNA ligase (Listeria welshimeri serovar 6b (strain ATCC 35897 / DSM 20650 / CCUG 15529 / CIP 8149 / NCTC 11857 / SLCC 5334 / V8)).